Consider the following 227-residue polypeptide: MAKGVFITATNTDIGKTYITALIVKKLREANINCGYYKAVLSGAEIINNNIVAGDAKYVYNVANIKGNPNKCVSYIFEQPVSPHLAAKLNNVHISMDKIVDDFNYICNEHDYITVEGSGGIVCPIYYDKEKIMLTDIIKKLKIPIILVSSSGLGSINGTILTLEYIKKHNITVNSIILNNYDKNNIIHIDNRIILEEMTNLPVYICEQYSKDIDIPLKELKQFYDFI.

An ATP-binding site is contributed by 13 to 18; that stretch reads DIGKTY. Thr17 provides a ligand contact to Mg(2+). Lys38 is an active-site residue. Ser42 provides a ligand contact to substrate. Residues Asp55, 116-119, and 179-180 each bind ATP; these read EGSG and NN. The Mg(2+) site is built by Asp55 and Glu116.

Belongs to the dethiobiotin synthetase family. In terms of assembly, homodimer. Mg(2+) serves as cofactor.

The protein localises to the cytoplasm. The catalysed reaction is (7R,8S)-7,8-diammoniononanoate + CO2 + ATP = (4R,5S)-dethiobiotin + ADP + phosphate + 3 H(+). Its pathway is cofactor biosynthesis; biotin biosynthesis; biotin from 7,8-diaminononanoate: step 1/2. Functionally, catalyzes a mechanistically unusual reaction, the ATP-dependent insertion of CO2 between the N7 and N8 nitrogen atoms of 7,8-diaminopelargonic acid (DAPA, also called 7,8-diammoniononanoate) to form a ureido ring. This is ATP-dependent dethiobiotin synthetase BioD from Clostridium botulinum (strain Alaska E43 / Type E3).